We begin with the raw amino-acid sequence, 576 residues long: Sulfite reductase [NADPH] hemoprotein beta-component (576 aa).

C435, C441, C480, and C484 together coordinate [4Fe-4S] cluster. C484 contacts siroheme.

The protein belongs to the nitrite and sulfite reductase 4Fe-4S domain family. Alpha(8)-beta(8). The alpha component is a flavoprotein, the beta component is a hemoprotein. Siroheme serves as cofactor. Requires [4Fe-4S] cluster as cofactor.

The catalysed reaction is hydrogen sulfide + 3 NADP(+) + 3 H2O = sulfite + 3 NADPH + 4 H(+). It functions in the pathway sulfur metabolism; hydrogen sulfide biosynthesis; hydrogen sulfide from sulfite (NADPH route): step 1/1. In terms of biological role, component of the sulfite reductase complex that catalyzes the 6-electron reduction of sulfite to sulfide. This is one of several activities required for the biosynthesis of L-cysteine from sulfate. The protein is Sulfite reductase [NADPH] hemoprotein beta-component of Yersinia pseudotuberculosis serotype IB (strain PB1/+).